The chain runs to 405 residues: Protein lin-11 (405 aa).

Glycyl lysine isopeptide (Lys-Gly) (interchain with G-Cter in SUMO) cross-links involve residues Lys17 and Lys18. 2 consecutive LIM zinc-binding domains span residues 68 to 124 (CAAC…RRYS) and 127 to 187 (CAGC…TATK). The span at 189-205 (STPTSIHRPVSNGSECN) shows a compositional bias: polar residues. 2 disordered regions span residues 189-208 (STPTSIHRPVSNGSECNSDV) and 224-246 (GEGDCGKDNSDDSNSAKRRGPRT). Residues 241–300 (RRGPRTTIKAKQLETLKNAFAATPKPTRHIREQLAAETGLNMRVIQVWFQNRRSKERRMK) constitute a DNA-binding region (homeobox).

As to expression, expressed in ADL, AVJL, AIZL, RICL, RIF and AVG neurons.

Its subcellular location is the nucleus. Probable transcription factor which is required for asymmetric division of vulval blast cells. Involved in olfactory plasticity probably by regulating the expression of transcription factor mbr-1 in RIF neurons. Plays a role in the chemorepulsive response toward ascaroside pheromones mediated by the ADL sensory neurons, probably by regulating E-box motif 5'-CANNTG-3' containing target genes in the ADL neurons. Plays a role in the differentiation of the ADL sensory neurons. This chain is Protein lin-11 (lin-11), found in Caenorhabditis elegans.